Reading from the N-terminus, the 203-residue chain is MSRYRGPRLKIIRRLKTLPGLTSKRPKNRKDSMNMNRSSSRKISQYRIRLEEKQKLRFHYGLTERQLLKYVRVSRRAKGSTGQVLLQLLEMRLDNIIFRLGMAPTIPGARQLVNHGHIRVNDHMVDIPSYPCKPQDVITIRDQPRLRAIIKKNIDLFQRDKLPNHLTFHPLQYKGFINQIIDSKWISLKINELLVVEYYSRQA.

A disordered region spans residues 18-42 (LPGLTSKRPKNRKDSMNMNRSSSRK). Residues 33 to 42 (MNMNRSSSRK) are compositionally biased toward polar residues. The S4 RNA-binding domain occupies 91–152 (MRLDNIIFRL…QPRLRAIIKK (62 aa)).

Belongs to the universal ribosomal protein uS4 family. As to quaternary structure, part of the 30S ribosomal subunit. Contacts protein S5. The interaction surface between S4 and S5 is involved in control of translational fidelity.

It localises to the plastid. Its subcellular location is the chloroplast. One of the primary rRNA binding proteins, it binds directly to 16S rRNA where it nucleates assembly of the body of the 30S subunit. In terms of biological role, with S5 and S12 plays an important role in translational accuracy. The protein is Small ribosomal subunit protein uS4c (rps4) of Pinus koraiensis (Korean pine).